The sequence spans 442 residues: Putative mannan endo-1,6-alpha-mannosidase C1198.07c (442 aa).

The first 19 residues, 1–19, serve as a signal peptide directing secretion; it reads MRYLSFFFEFFFLFSFAFA. The Lumenal portion of the chain corresponds to 20-421; it reads FDFDVTSDDS…TPATKSDKGW (402 aa). N-linked (GlcNAc...) asparagine glycosylation is found at Asn-75, Asn-124, Asn-193, Asn-229, Asn-254, Asn-257, and Asn-356. A helical transmembrane segment spans residues 422–442; it reads AGFLTFAFSFVFLLFSIWLYF.

This sequence belongs to the glycosyl hydrolase 76 family.

Its subcellular location is the endoplasmic reticulum membrane. The catalysed reaction is Random hydrolysis of (1-&gt;6)-alpha-D-mannosidic linkages in unbranched (1-&gt;6)-mannans.. The protein is Putative mannan endo-1,6-alpha-mannosidase C1198.07c of Schizosaccharomyces pombe (strain 972 / ATCC 24843) (Fission yeast).